Reading from the N-terminus, the 301-residue chain is Sulfate adenylyltransferase subunit 2 (301 aa).

This sequence belongs to the PAPS reductase family. CysD subfamily. Heterodimer composed of CysD, the smaller subunit, and CysN.

It catalyses the reaction sulfate + ATP + H(+) = adenosine 5'-phosphosulfate + diphosphate. It functions in the pathway sulfur metabolism; hydrogen sulfide biosynthesis; sulfite from sulfate: step 1/3. In terms of biological role, with CysN forms the ATP sulfurylase (ATPS) that catalyzes the adenylation of sulfate producing adenosine 5'-phosphosulfate (APS) and diphosphate, the first enzymatic step in sulfur assimilation pathway. APS synthesis involves the formation of a high-energy phosphoric-sulfuric acid anhydride bond driven by GTP hydrolysis by CysN coupled to ATP hydrolysis by CysD. In Geotalea daltonii (strain DSM 22248 / JCM 15807 / FRC-32) (Geobacter daltonii), this protein is Sulfate adenylyltransferase subunit 2.